Consider the following 148-residue polypeptide: Hemoglobin subunit beta (148 aa).

A Globin domain is found at 3–148 (DWTDAERSAI…VVSALGRQYH (146 aa)). His64 and His93 together coordinate heme b.

It belongs to the globin family. In terms of assembly, heterotetramer of two alpha chains and two beta chains. In terms of tissue distribution, red blood cells.

Functionally, involved in oxygen transport from gills to the various peripheral tissues. The polypeptide is Hemoglobin subunit beta (hbb) (Oncorhynchus nerka (Sockeye salmon)).